Consider the following 118-residue polypeptide: Large ribosomal subunit protein uL18 (118 aa).

Positions 1 to 24 (MISKPDKNKIRQKRHRRVRGKLSG) are disordered. The span at 10–20 (IRQKRHRRVRG) shows a compositional bias: basic residues.

It belongs to the universal ribosomal protein uL18 family. Part of the 50S ribosomal subunit; part of the 5S rRNA/L5/L18/L25 subcomplex. Contacts the 5S and 23S rRNAs.

This is one of the proteins that bind and probably mediate the attachment of the 5S RNA into the large ribosomal subunit, where it forms part of the central protuberance. This is Large ribosomal subunit protein uL18 from Streptococcus agalactiae serotype III (strain NEM316).